The following is a 115-amino-acid chain: uncharacterized protein (115 aa).

Residues 1 to 26 form the signal peptide; sequence MNFKKTVVSALSISALALSVSGVASA. Positions 36-114 constitute a BIG2 domain; it reads VKNISISPTH…AVFGKVYVTV (79 aa).

This is an uncharacterized protein from Bacillus subtilis (strain 168).